Reading from the N-terminus, the 274-residue chain is Triosephosphate isomerase (274 aa).

31-33 (NWK) serves as a coordination point for substrate. The active-site Electrophile is His-118. The Proton acceptor role is filled by Glu-188. Residues Gly-194, Ser-234, and 255–256 (GG) each bind substrate.

Belongs to the triosephosphate isomerase family. In terms of assembly, homodimer.

It is found in the cytoplasm. The catalysed reaction is D-glyceraldehyde 3-phosphate = dihydroxyacetone phosphate. It participates in carbohydrate biosynthesis; gluconeogenesis. It functions in the pathway carbohydrate degradation; glycolysis; D-glyceraldehyde 3-phosphate from glycerone phosphate: step 1/1. In terms of biological role, involved in the gluconeogenesis. Catalyzes stereospecifically the conversion of dihydroxyacetone phosphate (DHAP) to D-glyceraldehyde-3-phosphate (G3P). The sequence is that of Triosephosphate isomerase from Chlamydia trachomatis serovar A (strain ATCC VR-571B / DSM 19440 / HAR-13).